The sequence spans 75 residues: Beta-defensin 30 (75 aa).

The N-terminal stretch at 1–22 is a signal peptide; that stretch reads MGSLQLTLVLFVLLSYVPPVRS. 3 disulfide bridges follow: Cys35-Cys62, Cys42-Cys56, and Cys46-Cys63.

Belongs to the beta-defensin family.

It localises to the secreted. In terms of biological role, has antibacterial activity. The polypeptide is Beta-defensin 30 (Defb30) (Mus musculus (Mouse)).